The sequence spans 609 residues: Mitogen-activated protein kinase kinase kinase 3 (609 aa).

Positions 1-202 (MPTWWGRKSC…SAVHGSRIGG (202 aa)) are disordered. A compositionally biased stretch (basic and acidic residues) spans 11–28 (KNKDDNHRGIISTDRDIK). Low complexity-rich tracts occupy residues 40–64 (PTRG…GFDS) and 90–108 (VSGS…SSGS). Residues 214–470 (WKKGKFLGSG…ASQLLEHPFL (257 aa)) form the Protein kinase domain. ATP contacts are provided by residues 220–228 (LGSGTFGQV) and Lys-243. The Proton acceptor role is filled by Asp-339. Disordered stretches follow at residues 487-511 (PRSY…SHDN) and 590-609 (MEPS…SRLV). Positions 594–609 (SFRTQTPNSPLRSRLV) are enriched in polar residues.

This sequence belongs to the protein kinase superfamily. STE Ser/Thr protein kinase family. MAP kinase kinase kinase subfamily. Interacts with PBL27. In terms of tissue distribution, expressed in flower buds, roots, leaves, seedlings, stems and immature siliques. Absent of mature pollen.

The catalysed reaction is L-seryl-[protein] + ATP = O-phospho-L-seryl-[protein] + ADP + H(+). The enzyme catalyses L-threonyl-[protein] + ATP = O-phospho-L-threonyl-[protein] + ADP + H(+). This chain is Mitogen-activated protein kinase kinase kinase 3, found in Arabidopsis thaliana (Mouse-ear cress).